The sequence spans 447 residues: tRNA threonylcarbamoyladenosine dehydratase 2 (447 aa).

Helical transmembrane passes span 9 to 29 (LITATALFTVAVTTITDYAWT), 86 to 106 (NQYVVVVGAGGVGSWVVNSLV), and 294 to 314 (ILPVLGTMPSLFGLTITTWIL).

It belongs to the HesA/MoeB/ThiF family.

It is found in the mitochondrion outer membrane. In terms of biological role, catalyzes the ATP-dependent dehydration of threonylcarbamoyladenosine at position 37 (t(6)A37) to form cyclic t(6)A37 (ct(6)A37) in tRNAs that read codons beginning with adenine. In Saccharomyces cerevisiae (strain ATCC 204508 / S288c) (Baker's yeast), this protein is tRNA threonylcarbamoyladenosine dehydratase 2 (TCD2).